The chain runs to 969 residues: MMISTAYQSLFLTALFSAISIAVGNVYQTLNVIGDRNVTIPTNGIPQRLSVYDPYRGVNCQGYQAVNISESQNGVTAYLALLGEPCYAYGTDYPLLFLNVTYEEADRVHISIKDANNTQFQFTSRKDLWDAPLYSPSYNNTNLLYNFSYNANPFEFWVTRKSDGEVLFDTRGQKLVFEDQYIELTTNMVENYNLYGLAETIHGLRLGNNLTRTFWANDEPSPVDQNMYGSHPYYLEQRYKADGINSTLNETTYTSSSHGVLMLTANGMDVLLRQDYLQYRMIGGVIDLFVYSGSTESPKETVKQFVQSIGKPAMHQYWTLGYHSCRWGYTNITEIMDVRQNYIDADIPVETFWSDIDYMEKYRDFTVDPVSYSKSDMQTFFSDLVSNHQHYVPIIDAAIYAANPYNHTDDSYYPYYAGVEKDIFLKNPNGSIYIGAVWPGFTAFPDFTNPDVVDYWKDCLINLTYAFGSNGTVPFSGIWTDMNEPSSFCVGSCGSAMIDLNPAEPLTGISKQYSIPEGFNVSNVTEYSSAYSASLSNYYATATSSVFQIVSPTATPLGLKPDYNIDWPPYAINNEQGNHDIANHIVSPNATTHDGTQRYDIFNMYGYGETKVSYAALTQISPNERPFILSRSTFLGSGVYGAHWLGDNHSLWSNMFFSISGMIVFNMMGIPMVGADVCGFLGDSDEELCSRWMAMGAFSPFYRNHNNIYQISQEPYTWSSVAEASRRAMYIRYSLLPYWYTIMAKASQDGTPALRALFVEFPNDPTLADVDRQFMVGDSLLVTPVLEPNVEYVQGVFPGDNSTVWYDWYNHTEIVRQYNENVTLYAPLEHINVAIRGGSVLPMQQPSLTTYESRQNPFNLLVALDRDGSATGELYLDDGVSIELNATLSVSFTFSDGVLSAVPTGSYEVSQPLANVTILGLTESPSSITLNGQNVSSFQYSNDTEELLITGLQNITSSGAFANSWNLTL.

The signal sequence occupies residues 1–24; it reads MMISTAYQSLFLTALFSAISIAVG. N-linked (GlcNAc...) asparagine glycans are attached at residues N37, N67, N99, N116, N139, N146, N209, N245, N249, N331, N406, N429, N462, and N470. The active-site Nucleophile is the D481. E484 is a catalytic residue. 3 N-linked (GlcNAc...) asparagine glycosylation sites follow: N520, N523, and N589. D647 functions as the Proton donor in the catalytic mechanism. N-linked (GlcNAc...) asparagine glycosylation is found at N648, N801, N810, N821, N885, N915, N934, N942, N954, and N966.

The protein belongs to the glycosyl hydrolase 31 family.

The protein resides in the secreted. The catalysed reaction is Hydrolysis of terminal, non-reducing (1-&gt;4)-linked alpha-D-glucose residues with release of alpha-D-glucose.. Functionally, hydrolyzes malto-oligosaccharides, but has a low activity toward soluble starch. This is Alpha-glucosidase (agl1) from Schizosaccharomyces pombe (strain 972 / ATCC 24843) (Fission yeast).